The following is a 167-amino-acid chain: Protein FimG (167 aa).

A signal peptide spans 1–23 (MKWCKRGYVLAAILALASATIQA). A disulfide bridge links cysteine 39 with cysteine 77.

This sequence belongs to the fimbrial protein family.

The protein localises to the fimbrium. Its function is as follows. Involved in regulation of length and mediation of adhesion of type 1 fimbriae (but not necessary for the production of fimbriae). Involved in the integration of FimH in the fimbriae. The protein is Protein FimG (fimG) of Escherichia coli (strain K12).